Here is a 445-residue protein sequence, read N- to C-terminus: Homogentisate 1,2-dioxygenase (445 aa).

Residue lysine 98 is modified to N6-acetyllysine. Residues histidine 335, glutamate 341, and histidine 371 each coordinate Fe cation. Lysine 414 carries the N6-succinyllysine modification.

This sequence belongs to the homogentisate dioxygenase family. In terms of assembly, homohexamer arranged as a dimer of trimers. It depends on Fe cation as a cofactor.

The catalysed reaction is homogentisate + O2 = 4-maleylacetoacetate + H(+). Its pathway is amino-acid degradation; L-phenylalanine degradation; acetoacetate and fumarate from L-phenylalanine: step 4/6. Its function is as follows. Catalyzes the conversion of homogentisate to maleylacetoacetate. The chain is Homogentisate 1,2-dioxygenase (Hgd) from Mus musculus (Mouse).